A 222-amino-acid polypeptide reads, in one-letter code: MTRLKICGIKRTETLALLKELEVDYVGLVFAPSKRQVDAQTAGQLLAAVPGHPPAVGVFVNPTMEELEEVLSEAPLSVIQLHGQETPQFCQQVRERFALPVWKALAVGGEADAALAIQSYQGIVSAFLFDTYDPGQAGGTGKKFSWEQIPALQAACEAADCIIAGGIHAENVGELMGQYQAGIVDVSSGVETDGVKDAQKIKTLVERVKAHEQHSNNYASRA.

Belongs to the TrpF family.

It carries out the reaction N-(5-phospho-beta-D-ribosyl)anthranilate = 1-(2-carboxyphenylamino)-1-deoxy-D-ribulose 5-phosphate. The protein operates within amino-acid biosynthesis; L-tryptophan biosynthesis; L-tryptophan from chorismate: step 3/5. This is N-(5'-phosphoribosyl)anthranilate isomerase from Brevibacillus brevis (strain 47 / JCM 6285 / NBRC 100599).